Consider the following 282-residue polypeptide: Ubiquinone biosynthesis protein COQ4 homolog, mitochondrial (282 aa).

Residues 1-30 (MFVRKSCYSLINATRRCLRYRQLSSTTAGT) constitute a mitochondrion transit peptide. Residues His-186, Asp-187, His-190, and Glu-202 each contribute to the Zn(2+) site.

The protein belongs to the COQ4 family. As to quaternary structure, component of a multi-subunit COQ enzyme complex. It depends on Zn(2+) as a cofactor.

The protein localises to the mitochondrion inner membrane. It catalyses the reaction a 4-hydroxy-3-methoxy-5-(all-trans-polyprenyl)benzoate + H(+) = a 2-methoxy-6-(all-trans-polyprenyl)phenol + CO2. Its pathway is cofactor biosynthesis; ubiquinone biosynthesis. Lyase that catalyzes the C1-decarboxylation of 4-hydroxy-3-methoxy-5-(all-trans-polyprenyl)benzoic acid into 2-methoxy-6-(all-trans-polyprenyl)phenol during ubiquinone biosynthesis. In Anopheles gambiae (African malaria mosquito), this protein is Ubiquinone biosynthesis protein COQ4 homolog, mitochondrial.